Here is a 226-residue protein sequence, read N- to C-terminus: PKHD-type hydroxylase Sde_2812 (226 aa).

The Fe2OG dioxygenase domain occupies 78-178 (KIFPPLFNCY…RLASFFWLQS (101 aa)). Residues histidine 96, aspartate 98, and histidine 159 each contribute to the Fe cation site. Residue arginine 169 coordinates 2-oxoglutarate.

Fe(2+) serves as cofactor. Requires L-ascorbate as cofactor.

This chain is PKHD-type hydroxylase Sde_2812, found in Saccharophagus degradans (strain 2-40 / ATCC 43961 / DSM 17024).